Here is a 240-residue protein sequence, read N- to C-terminus: 5-oxoprolinase subunit B (240 aa).

194–201 (GWQLIGKT) contributes to the ATP binding site.

Belongs to the PxpB family. In terms of assembly, forms a complex composed of PxpA, PxpB and PxpC. Interacts with PxpC (KipA). Interaction with PxpC prevents the inhibitory action of PxpB (KipI). Interacts with KinA. Two PxpB monomers bind via their C-domains at a conserved proline in the KinA dimerization and histidine-phosphotransfer (DHp) domain.

It carries out the reaction 5-oxo-L-proline + ATP + 2 H2O = L-glutamate + ADP + phosphate + H(+). In terms of biological role, catalyzes the cleavage of 5-oxoproline to form L-glutamate coupled to the hydrolysis of ATP to ADP and inorganic phosphate. In addition, is a potent inhibitor of the autophosphorylation reaction of kinase A (kinA) and its reverse reaction, but does not inhibit phosphate transfer to the Spo0F response regulator once kinase A is phosphorylated. Is an inhibitor of the catalytic domain of kinase A affecting the ATP/ADP reactions and not the phosphotransferase functions of this domain. The inhibition is non-competitive with respect to ATP. The protein is 5-oxoprolinase subunit B of Bacillus subtilis (strain 168).